We begin with the raw amino-acid sequence, 500 residues long: MATVIPGDLSEVRDTQKVPSGKRKRGETKPRKNFPCQLCDKAFNSVEKLKVHSYSHTGERPYKCIQQDCTKAFVSKYKLQRHMATHSPEKTHKCNYCEKMFHRKDHLKNHLHTHDPNKETFKCEECGKNYNTKLGFKRHLALHAATSGDLTCKVCLQTFESTGVLLEHLKSHAGKSSGGVKEKKHQCEHCDRRFYTRKDVRRHMVVHTGRKDFLCQYCAQRFGRKDHLTRHMKKSHNQELLKVKTEPVDFLDPFTCNVSVPIKDELLPVMSLPSSELLSKPFTNTLQLNLYNTPFQSMQSSGSAHQMITTLPLGMTCPIDMDTVHPSHHLSFKYPFSSTSYAISIPEKEQPLKGEIESYLMELQGGVPSSSQDSQASSSSKLGLDPQIGSLDDGAGDLSLSKSSISISDPLNTPALDFSQLFNFIPLNGPPYNPLSVGSLGMSYSQEEAHSSVSQLPPQTQDLQDPANTIGLGSLHSLSAAFTSSLSTSTTLPRFHQAFQ.

The segment at 1-30 (MATVIPGDLSEVRDTQKVPSGKRKRGETKP) is disordered. The segment at 2 to 84 (ATVIPGDLSE…SKYKLQRHMA (83 aa)) is interaction with KPNA2. A Nuclear localization signal motif is present at residues 22-25 (KRKR). C2H2-type zinc fingers lie at residues 34–56 (FPCQLCDKAFNSVEKLKVHSYSH), 62–86 (YKCIQQDCTKAFVSKYKLQRHMATH), 92–114 (HKCNYCEKMFHRKDHLKNHLHTH), 121–143 (FKCEECGKNYNTKLGFKRHLALH), 150–172 (LTCKVCLQTFESTGVLLEHLKSH), 185–207 (HQCEHCDRRFYTRKDVRRHMVVH), and 213–236 (FLCQYCAQRFGRKDHLTRHMKKSH). Residues 41 to 242 (KAFNSVEKLK…KKSHNQELLK (202 aa)) form a decreased nuclear import with localization in the nucleus but also in the cytoplasm region. The repression domain; contains 3 sumoylation motifs and massively decrease transcription activity stretch occupies residues 243-384 (VKTEPVDFLD…QASSSSKLGL (142 aa)). Positions 243–500 (VKTEPVDFLD…TLPRFHQAFQ (258 aa)) are activates transcription; Inhibition of nuclear import due to lack of NLS and KPNA2 interaction. Residues Lys-244 and Lys-263 each participate in a glycyl lysine isopeptide (Lys-Gly) (interchain with G-Cter in SUMO) cross-link. The disordered stretch occupies residues 365–388 (GGVPSSSQDSQASSSSKLGLDPQI). The segment covering 369–380 (SSSQDSQASSSS) has biased composition (low complexity). The segment at 385–500 (DPQIGSLDDG…TLPRFHQAFQ (116 aa)) is massively activates transcription.

The protein belongs to the krueppel C2H2-type zinc-finger protein family. As to quaternary structure, interacts with KPNA2, which escorts protein to the nucleus via interaction with nuclear localization signal. Interacts with E3 SUMO-protein ligase PIAS1, PIAS2 and PIAS4. In terms of processing, sumoylated with SUMO1; which inhibits transcriptional activity, but does not affect nuclear localization. Blockers of sumoylation pathway such as SENP3 and inactive UBE2I increases transcriptional capacity. Sumoylation is increased in the presence of PIAS1. Post-translationally, acetylated by lysine acetyltransferase EP300; which activates transcriptional capacity. Lysine residues that are sumoylated also seem to be target for acetylation. As to expression, expressed in fetal tissues such as lung, liver and kidney. Not detected or weak detection in normal adult tissues, but highly expressed in salivary gland with benign or malignant pleiomorphic adenomas with or without 8q12 aberrations, with preferential occurrence in benign tumors.

The protein resides in the nucleus. Its function is as follows. Transcription factor whose activation results in up-regulation of target genes, such as IGFII, leading to uncontrolled cell proliferation: when overexpressed in cultured cells, higher proliferation rate and transformation are observed. Other target genes such as CRLF1, CRABP2, CRIP2, PIGF are strongly induced in cells with PLAG1 induction. Proto-oncogene whose ectopic expression can trigger the development of pleomorphic adenomas of the salivary gland and lipoblastomas. Overexpression is associated with up-regulation of IGFII, is frequently observed in hepatoblastoma, common primary liver tumor in childhood. Cooperates with CBFB-MYH11, a fusion gene important for myeloid leukemia. In Homo sapiens (Human), this protein is Zinc finger protein PLAG1 (PLAG1).